Reading from the N-terminus, the 300-residue chain is Diphthine methyl ester synthase (300 aa).

S-adenosyl-L-methionine contacts are provided by residues leucine 9, aspartate 85, glycine 88, 113–114, leucine 164, leucine 222, and histidine 247; that span reads SV.

Belongs to the diphthine synthase family.

It is found in the cytoplasm. The enzyme catalyses 2-[(3S)-amino-3-carboxypropyl]-L-histidyl-[translation elongation factor 2] + 4 S-adenosyl-L-methionine = diphthine methyl ester-[translation elongation factor 2] + 4 S-adenosyl-L-homocysteine + 3 H(+). It participates in protein modification; peptidyl-diphthamide biosynthesis. Functionally, S-adenosyl-L-methionine-dependent methyltransferase that catalyzes four methylations of the modified target histidine residue in translation elongation factor 2 (EF-2), to form an intermediate called diphthine methyl ester. The four successive methylation reactions represent the second step of diphthamide biosynthesis. In Yarrowia lipolytica (strain CLIB 122 / E 150) (Yeast), this protein is Diphthine methyl ester synthase (DPH5).